Consider the following 319-residue polypeptide: Acetyl esterase (319 aa).

The short motif at 91-93 (HGG) is the Involved in the stabilization of the negatively charged intermediate by the formation of the oxyanion hole element. Active-site residues include S165, D262, and H292.

Belongs to the 'GDXG' lipolytic enzyme family. In terms of assembly, homodimer. Interacts with MalT and MelA.

The protein resides in the cytoplasm. Displays esterase activity towards short chain fatty esters (acyl chain length of up to 8 carbons). Able to hydrolyze triacetylglycerol (triacetin) and tributyrylglycerol (tributyrin), but not trioleylglycerol (triolein) or cholesterol oleate. Negatively regulates MalT activity by antagonizing maltotriose binding. Inhibits MelA galactosidase activity. This Escherichia coli O8 (strain IAI1) protein is Acetyl esterase.